The sequence spans 428 residues: Histidine--tRNA ligase (428 aa).

Belongs to the class-II aminoacyl-tRNA synthetase family. Homodimer.

It is found in the cytoplasm. The catalysed reaction is tRNA(His) + L-histidine + ATP = L-histidyl-tRNA(His) + AMP + diphosphate + H(+). The sequence is that of Histidine--tRNA ligase from Pseudomonas entomophila (strain L48).